Reading from the N-terminus, the 273-residue chain is Shikimate dehydrogenase (NADP(+)) (273 aa).

Shikimate is bound by residues 15 to 17 (SKS) and T62. The active-site Proton acceptor is K66. E78 is an NADP(+) binding site. 2 residues coordinate shikimate: N87 and D103. Residues 127-131 (GAGGA), 150-155 (NRTQEK), and M213 contribute to the NADP(+) site. Y215 serves as a coordination point for shikimate. NADP(+) is bound at residue G237.

The protein belongs to the shikimate dehydrogenase family. In terms of assembly, homodimer.

It carries out the reaction shikimate + NADP(+) = 3-dehydroshikimate + NADPH + H(+). It participates in metabolic intermediate biosynthesis; chorismate biosynthesis; chorismate from D-erythrose 4-phosphate and phosphoenolpyruvate: step 4/7. Involved in the biosynthesis of the chorismate, which leads to the biosynthesis of aromatic amino acids. Catalyzes the reversible NADPH linked reduction of 3-dehydroshikimate (DHSA) to yield shikimate (SA). The chain is Shikimate dehydrogenase (NADP(+)) from Shewanella woodyi (strain ATCC 51908 / MS32).